A 158-amino-acid chain; its full sequence is NAD(P)H-quinone oxidoreductase subunit J, chloroplastic (158 aa).

It belongs to the complex I 30 kDa subunit family. NDH is composed of at least 16 different subunits, 5 of which are encoded in the nucleus.

It localises to the plastid. The protein localises to the chloroplast thylakoid membrane. The enzyme catalyses a plastoquinone + NADH + (n+1) H(+)(in) = a plastoquinol + NAD(+) + n H(+)(out). The catalysed reaction is a plastoquinone + NADPH + (n+1) H(+)(in) = a plastoquinol + NADP(+) + n H(+)(out). Functionally, NDH shuttles electrons from NAD(P)H:plastoquinone, via FMN and iron-sulfur (Fe-S) centers, to quinones in the photosynthetic chain and possibly in a chloroplast respiratory chain. The immediate electron acceptor for the enzyme in this species is believed to be plastoquinone. Couples the redox reaction to proton translocation, and thus conserves the redox energy in a proton gradient. In Panax ginseng (Korean ginseng), this protein is NAD(P)H-quinone oxidoreductase subunit J, chloroplastic.